Here is a 293-residue protein sequence, read N- to C-terminus: Protease HtpX (293 aa).

The next 2 helical transmembrane spans lie at 4 to 24 (IALF…ILSL) and 32 to 52 (VMGL…VSLL). His-139 is a Zn(2+) binding site. The active site involves Glu-140. Residue His-143 coordinates Zn(2+). 2 consecutive transmembrane segments (helical) span residues 158 to 178 (IVNT…AGFM) and 193 to 213 (MVYF…ASTI). Glu-222 lines the Zn(2+) pocket.

Belongs to the peptidase M48B family. It depends on Zn(2+) as a cofactor.

It is found in the cell inner membrane. In Erwinia tasmaniensis (strain DSM 17950 / CFBP 7177 / CIP 109463 / NCPPB 4357 / Et1/99), this protein is Protease HtpX.